The chain runs to 127 residues: Glycine cleavage system H protein (127 aa).

The Lipoyl-binding domain maps to 22-104; it reads KARIGITHFA…YEKAWMIVVE (83 aa). Lys-63 carries the post-translational modification N6-lipoyllysine.

It belongs to the GcvH family. In terms of assembly, the glycine cleavage system is composed of four proteins: P, T, L and H. (R)-lipoate serves as cofactor.

Its function is as follows. The glycine cleavage system catalyzes the degradation of glycine. The H protein shuttles the methylamine group of glycine from the P protein to the T protein. In terms of biological role, is also involved in protein lipoylation via its role as an octanoyl/lipoyl carrier protein intermediate. The sequence is that of Glycine cleavage system H protein from Bacillus velezensis (strain DSM 23117 / BGSC 10A6 / LMG 26770 / FZB42) (Bacillus amyloliquefaciens subsp. plantarum).